A 321-amino-acid polypeptide reads, in one-letter code: MSPSLVTLNSLMYIIPILIAVAFLTLTERKILGYMQHRKGPNITGPHGLLQPIADGLKLFIKEPVRPLNASPTLLILSPLLAITAAMLIWAPIPMPYSLANLNLGLLSILAISGMAVNSILWAGWASNSKYALIGSLRAVAQTISYEVTLGIILLSTLVLTGGFTIQLLTITQKYTWLLTTSWPLTMMWFISTLAETNRAPFDLTEGESELVSGFNVEYAGGPFALFFLAEYANIITMNLLTCILFINPGPSQYPELFLANLIAKTTILCLSFLWIRASYPRFRYDQLMHLLWKQFLPMTMALCLLHASLSISISGLPPHP.

8 helical membrane passes run L5–T25, L74–P94, L104–G124, G151–I171, Y175–A195, F227–I247, E256–I276, and F296–G316.

The protein belongs to the complex I subunit 1 family.

It localises to the mitochondrion inner membrane. The catalysed reaction is a ubiquinone + NADH + 5 H(+)(in) = a ubiquinol + NAD(+) + 4 H(+)(out). Its function is as follows. Core subunit of the mitochondrial membrane respiratory chain NADH dehydrogenase (Complex I) that is believed to belong to the minimal assembly required for catalysis. Complex I functions in the transfer of electrons from NADH to the respiratory chain. The immediate electron acceptor for the enzyme is believed to be ubiquinone. In Varanus baritji (Black-spotted ridge-tailed monitor), this protein is NADH-ubiquinone oxidoreductase chain 1 (MT-ND1).